The primary structure comprises 475 residues: MDKRSFKVIVVGGSIAGLTLAHSLDLAGIDYIVLEKHSDPLATVGGSVGLLPNGWRILHQLGLRHQLEQEACPVKVAHMTYPDGFVFSDNFPAAIQERQVPEIQFPIGYMPANDERFGYSLSVLTRQQLIEVLYLGLRDKSKIKVGQRVIKIQHHQNRRGVSVFTESGQEHVGDLVAGADGVHSITRSQMWLQLGQKLDAEKERRQLVAEYSCVFGISSPLKGIPPGEQLIACHDNATVLAFPGKDAHIGWGLIQKLNRPCNSPATTQSSDGETALIMAKSAAGLGLCKDLKFHDLWVNTPKYSFTILEEGLFQIWHHGRIMTPNMAQGANTAIEGAAALANTLRRISQIDKPSEDDINRLLQGYTVRQQKRLRAVHAISRSVTRVHARQGRIKKIIGRYVYPYTPGAALHTFSRIIAPAPCLDYVPMPFPGPGWTRALVSGWSPISGVLLLVIPIIALVYGYSVINFGRDSINN.

The first 23 residues, Met-1–Ser-23, serve as a signal peptide directing secretion. The FAD site is built by Glu-35, Gly-49, and Arg-126. An N-linked (GlcNAc...) asparagine glycan is attached at Asn-236. Ala-330 contributes to the FAD binding site. The chain crosses the membrane as a helical span at residues Ile-446–Ile-466.

This sequence belongs to the paxM FAD-dependent monooxygenase family. FAD serves as cofactor.

The protein resides in the membrane. It participates in secondary metabolite biosynthesis. FAD-dependent monooxygenase; part of the gene cluster that mediates the biosynthesis of the polyenes aspernidgulenes. The carbon backbone of aspernidgulenes is synthesized by the HR-PKS sdgA, which accepts acetyl-CoA as the starter unit and performs malonyl-CoA extensions as well as regioselective methylation and reduction. The resulting nonaketide offloads the HR-PKS by intramolecular lactonization to yield the 5,6-dihydro-alpha-pyrone-containing hexaenoic acids preaspernidgulene A1 and A2. The FAD-dependent monooxygenase sdgC then installs the first epoxide on the penultimate double bond. Subsequently, the FAD-dependent monooxygenase sdgF presumably generates a ketone intermediate through Meinwald rearrangement involving a hydride shift. Next, sdgC introduces another epoxide on the last olefin of the ketone intermediate after E/Z isomerization. The epoxide hydrolase sdgD then catalyzes stereospecific cyclization of the 5,6-dihydro-alpha-pyrone and opening of the epoxide ring to form an oxygenated trimethylcyclopentanone and an oxabicyclo[2.2.1]heptane unit. Finally, the bicyclic unit undergoes hydrolytic cleavage, either spontaneously or catalyzed by sdgD, to assemble the dimethyl-gamma-lactone moiety in aspernidgulene A1. The chain is FAD-dependent monooxygenase sdgC from Emericella nidulans (strain FGSC A4 / ATCC 38163 / CBS 112.46 / NRRL 194 / M139) (Aspergillus nidulans).